Consider the following 288-residue polypeptide: Octanoyl-[GcvH]:protein N-octanoyltransferase (288 aa).

One can recognise a BPL/LPL catalytic domain in the interval 44 to 253 (AGGPPTFRLW…VLESAMGPQV (210 aa)). Catalysis depends on Cys-148, which acts as the Acyl-thioester intermediate. The disordered stretch occupies residues 269-288 (GREGASETDPRRVAYGVDRP). Residues 272–288 (GASETDPRRVAYGVDRP) are compositionally biased toward basic and acidic residues.

The protein belongs to the octanoyltransferase LipL family.

It catalyses the reaction N(6)-octanoyl-L-lysyl-[glycine-cleavage complex H protein] + L-lysyl-[lipoyl-carrier protein] = N(6)-octanoyl-L-lysyl-[lipoyl-carrier protein] + L-lysyl-[glycine-cleavage complex H protein]. The protein operates within protein modification; protein lipoylation via endogenous pathway; protein N(6)-(lipoyl)lysine from octanoyl-[acyl-carrier-protein]. In terms of biological role, catalyzes the amidotransfer (transamidation) of the octanoyl moiety from octanoyl-GcvH to the lipoyl domain of the E2 subunit of lipoate-dependent enzymes. The sequence is that of Octanoyl-[GcvH]:protein N-octanoyltransferase from Kyrpidia tusciae (strain DSM 2912 / NBRC 15312 / T2) (Bacillus tusciae).